Here is a 444-residue protein sequence, read N- to C-terminus: Transcription activator AFTR-2 (444 aa).

A DNA-binding region (zn(2)-C6 fungal-type) is located at residues 16–43 (CDFCTQSKLRCNKNKPSCRRCTLQQQPC). The tract at residues 49–88 (RRTGRPPKHPRKANDCQEANGQHGDQDPVTSTPGGSYQQQ) is disordered. Positions 50 to 59 (RTGRPPKHPR) are enriched in basic residues. Positions 76 to 88 (PVTSTPGGSYQQQ) are enriched in polar residues.

Its subcellular location is the nucleus. Its function is as follows. Transcription factor that regulates the expression of the gene clusters that mediate the biosynthesis of the host-selective toxins (HSTs) AF-toxins responsible for Alternaria black spot of strawberry disease by the strawberry pathotype. On cellular level, AF-toxins affect plasma membrane of susceptible cells and cause a sudden increase in loss of K(+) after a few minutes of toxin treatment. The polypeptide is Transcription activator AFTR-2 (Alternaria alternata (Alternaria rot fungus)).